The sequence spans 468 residues: 6-phospho-beta-galactosidase (468 aa).

Residues Q19, H116, N159, E160, and N297 each contribute to the D-galactose 6-phosphate site. The Proton donor role is filled by E160. Residue E375 is the Nucleophile of the active site. Residues S428, W429, K435, and Y437 each contribute to the D-galactose 6-phosphate site.

This sequence belongs to the glycosyl hydrolase 1 family.

The catalysed reaction is a 6-phospho-beta-D-galactoside + H2O = D-galactose 6-phosphate + an alcohol. Its pathway is carbohydrate metabolism; lactose degradation; D-galactose 6-phosphate and beta-D-glucose from lactose 6-phosphate: step 1/1. In Streptococcus pyogenes serotype M4 (strain MGAS10750), this protein is 6-phospho-beta-galactosidase.